We begin with the raw amino-acid sequence, 25 residues long: Caerin-2.5 (25 aa).

In terms of tissue distribution, expressed by the skin parotoid and/or rostral glands.

It localises to the secreted. Antibacterial peptide, that adopts an alpha helical conformation which can disrupt bacterial membranes. Each caerin displays a different antimicrobial specificity. The chain is Caerin-2.5 from Ranoidea gilleni (Centralian tree frog).